The sequence spans 58 residues: Photosystem II reaction center protein K (58 aa).

Positions 1 to 21 (MTVSYSIYLENSLHFGDALLA) are excised as a propeptide. A helical transmembrane segment spans residues 29 to 49 (IFDPIVDVMPVIPVFFLLLAF).

The protein belongs to the PsbK family. In terms of assembly, PSII is composed of 1 copy each of membrane proteins PsbA, PsbB, PsbC, PsbD, PsbE, PsbF, PsbH, PsbI, PsbJ, PsbK, PsbL, PsbM, PsbT, PsbX, PsbY, PsbZ, Psb30/Ycf12, at least 3 peripheral proteins of the oxygen-evolving complex and a large number of cofactors. It forms dimeric complexes.

Its subcellular location is the plastid. It localises to the chloroplast thylakoid membrane. Its function is as follows. One of the components of the core complex of photosystem II (PSII). PSII is a light-driven water:plastoquinone oxidoreductase that uses light energy to abstract electrons from H(2)O, generating O(2) and a proton gradient subsequently used for ATP formation. It consists of a core antenna complex that captures photons, and an electron transfer chain that converts photonic excitation into a charge separation. This is Photosystem II reaction center protein K from Adiantum capillus-veneris (Maidenhair fern).